The chain runs to 348 residues: UDP-3-O-acylglucosamine N-acyltransferase (348 aa).

His248 (proton acceptor) is an active-site residue.

Belongs to the transferase hexapeptide repeat family. LpxD subfamily. In terms of assembly, homotrimer.

It catalyses the reaction a UDP-3-O-[(3R)-3-hydroxyacyl]-alpha-D-glucosamine + a (3R)-hydroxyacyl-[ACP] = a UDP-2-N,3-O-bis[(3R)-3-hydroxyacyl]-alpha-D-glucosamine + holo-[ACP] + H(+). The protein operates within bacterial outer membrane biogenesis; LPS lipid A biosynthesis. Functionally, catalyzes the N-acylation of UDP-3-O-acylglucosamine using 3-hydroxyacyl-ACP as the acyl donor. Is involved in the biosynthesis of lipid A, a phosphorylated glycolipid that anchors the lipopolysaccharide to the outer membrane of the cell. This chain is UDP-3-O-acylglucosamine N-acyltransferase, found in Rippkaea orientalis (strain PCC 8801 / RF-1) (Cyanothece sp. (strain PCC 8801)).